The sequence spans 189 residues: UPF0398 protein LCK_00599 (189 aa).

This sequence belongs to the UPF0398 family.

The chain is UPF0398 protein LCK_00599 from Leuconostoc citreum (strain KM20).